A 486-amino-acid polypeptide reads, in one-letter code: 2-hydroxymuconic semialdehyde dehydrogenase (486 aa).

Residues Glu-254 and Cys-288 contribute to the active site.

Belongs to the aldehyde dehydrogenase family.

The enzyme catalyses (2Z,4E)-2-hydroxy-6-oxohexa-2,4-dienoate + NAD(+) + H2O = (2Z,4E)-2-hydroxyhexa-2,4-dienedioate + NADH + 2 H(+). The protein operates within aromatic compound metabolism; benzoate degradation via hydroxylation. 2-hydroxymuconic acid semialdehyde can be converted to 2-hydroxypent-2,4-dienoate either directly by the action of 2-hydroxymuconic semialdehyde hydrolase (HMSH) or by the action of three sequential enzymes, the first of which is HMSD. This chain is 2-hydroxymuconic semialdehyde dehydrogenase (dmpC), found in Pseudomonas sp. (strain CF600).